The sequence spans 152 residues: Large ribosomal subunit protein bL9 (152 aa).

Belongs to the bacterial ribosomal protein bL9 family.

Functionally, binds to the 23S rRNA. This Trichormus variabilis (strain ATCC 29413 / PCC 7937) (Anabaena variabilis) protein is Large ribosomal subunit protein bL9.